The chain runs to 330 residues: Protein TIFY 11f (330 aa).

The region spanning E61–A97 is the Tify 1 domain. Positions P124–R142 match the Jas motif. The Nuclear localization signal motif lies at V126 to R133. The region spanning E228–A264 is the Tify 2 domain. Residues G267–Y330 form a disordered region.

This sequence belongs to the TIFY/JAZ family. Post-translationally, ubiquitinated. Targeted for degradation by the SCF(COI1) E3 ubiquitin ligase-proteasome pathway during jasmonate signaling.

It localises to the nucleus. Functionally, repressor of jasmonate responses. This chain is Protein TIFY 11f, found in Oryza sativa subsp. japonica (Rice).